A 466-amino-acid polypeptide reads, in one-letter code: Mitochondrial-processing peptidase subunit beta (466 aa).

A Zn(2+)-binding site is contributed by His-73. Glu-76 functions as the Proton acceptor in the catalytic mechanism. 2 residues coordinate Zn(2+): His-77 and Glu-153.

This sequence belongs to the peptidase M16 family. As to quaternary structure, heterodimer of mppA (alpha) and mppB (beta) subunits, forming the mitochondrial processing protease (MPP) in which mppA is involved in substrate recognition and binding and mppB is the catalytic subunit. Zn(2+) serves as cofactor.

Its subcellular location is the mitochondrion matrix. The enzyme catalyses Release of N-terminal transit peptides from precursor proteins imported into the mitochondrion, typically with Arg in position P2.. Binding to mppA is required for catalytic activity. Functionally, catalytic subunit of the essential mitochondrial processing protease (MPP), which cleaves the mitochondrial sequence off newly imported precursors proteins. Preferentially, cleaves after an arginine at position P2. This is Mitochondrial-processing peptidase subunit beta (mppB) from Lentinula edodes (Shiitake mushroom).